The chain runs to 596 residues: DNA polymerase kappa (596 aa).

Positions 85–320 (CVCIDMDAYF…LPIRKVGGIG (236 aa)) constitute a UmuC domain. Positions 89 and 180 each coordinate Mg(2+). Residue Glu-181 is part of the active site. The UBZ4-type zinc finger occupies 516–545 (TRPCPICGTDVENRLDVMNCHVDECILKVQ). Zn(2+) contacts are provided by Cys-519, Cys-522, His-536, and Cys-540. Residues 559-584 (NKSTQKPERPSTKKRKLQEKRPKAKK) are disordered. Basic residues predominate over residues 570-584 (TKKRKLQEKRPKAKK).

This sequence belongs to the DNA polymerase type-Y family. The cofactor is Mg(2+). It depends on Mn(2+) as a cofactor.

Its subcellular location is the nucleus. The enzyme catalyses DNA(n) + a 2'-deoxyribonucleoside 5'-triphosphate = DNA(n+1) + diphosphate. Its function is as follows. DNA polymerase specifically involved in DNA repair. Plays an important role in translesion synthesis, where the normal high-fidelity DNA polymerases cannot proceed and DNA synthesis stalls. Depending on the context, it inserts the correct base, but causes frequent base transitions, transversions and frameshifts. Lacks 3'-5' proofreading exonuclease activity. Forms a Schiff base with 5'-deoxyribose phosphate at abasic sites, but does not have lyase activity. The protein is DNA polymerase kappa (polk-1) of Caenorhabditis elegans.